A 478-amino-acid chain; its full sequence is Cytochrome c-552 (478 aa).

An N-terminal signal peptide occupies residues 1 to 26; that stretch reads MTRIKINARRIFSLLIPFFFFTSVHA. His-94 provides a ligand contact to heme c. Residues Cys-122, Cys-125, and Lys-126 each contribute to the heme site. Heme c is bound by residues Cys-160, Cys-163, His-164, Cys-209, Cys-212, and His-213. Ca(2+) contacts are provided by Glu-215, Tyr-216, Lys-261, and Gln-263. Position 216 (Tyr-216) interacts with substrate. Substrate is bound at residue His-264. Heme c contacts are provided by His-275, Cys-282, Cys-285, His-286, His-301, Cys-314, Cys-317, His-318, and His-393.

This sequence belongs to the cytochrome c-552 family. The cofactor is Ca(2+). Heme c is required as a cofactor.

It localises to the periplasm. The enzyme catalyses 6 Fe(III)-[cytochrome c] + NH4(+) + 2 H2O = 6 Fe(II)-[cytochrome c] + nitrite + 8 H(+). Its pathway is nitrogen metabolism; nitrate reduction (assimilation). In terms of biological role, catalyzes the reduction of nitrite to ammonia, consuming six electrons in the process. The sequence is that of Cytochrome c-552 from Escherichia coli (strain ATCC 8739 / DSM 1576 / NBRC 3972 / NCIMB 8545 / WDCM 00012 / Crooks).